Reading from the N-terminus, the 266-residue chain is Esterase AGAP003155 (266 aa).

Catalysis depends on charge relay system residues S114, D172, and H199. Positions 231–266 are disordered; sequence ATEENSFHLEGQEEAEESALQPVHEGLQNGSDSDSD.

Belongs to the LovG family.

The sequence is that of Esterase AGAP003155 from Anopheles gambiae (African malaria mosquito).